The following is a 132-amino-acid chain: MAKEYSRTQRIGDQMQRELAELIRREVKDPRVGLVTITAVDVSRDLGHAKVFITVMGEETPDAVQQSLKALNSAASFLRLHLGRSMQLRSVPQLHFHFDESVSRGVHLSALIERAVAEDRLHKDADESGTKE.

This sequence belongs to the RbfA family. In terms of assembly, monomer. Binds 30S ribosomal subunits, but not 50S ribosomal subunits or 70S ribosomes.

Its subcellular location is the cytoplasm. Functionally, one of several proteins that assist in the late maturation steps of the functional core of the 30S ribosomal subunit. Associates with free 30S ribosomal subunits (but not with 30S subunits that are part of 70S ribosomes or polysomes). Required for efficient processing of 16S rRNA. May interact with the 5'-terminal helix region of 16S rRNA. The sequence is that of Ribosome-binding factor A from Pseudomonas putida (strain GB-1).